Consider the following 169-residue polypeptide: Ribosome maturation factor RimM (169 aa).

The PRC barrel domain maps to 94–168 (DDEFYHADLI…RIVADPPEGL (75 aa)).

It belongs to the RimM family. Binds ribosomal protein uS19.

The protein resides in the cytoplasm. Its function is as follows. An accessory protein needed during the final step in the assembly of 30S ribosomal subunit, possibly for assembly of the head region. Essential for efficient processing of 16S rRNA. May be needed both before and after RbfA during the maturation of 16S rRNA. It has affinity for free ribosomal 30S subunits but not for 70S ribosomes. In Cereibacter sphaeroides (strain ATCC 17025 / ATH 2.4.3) (Rhodobacter sphaeroides), this protein is Ribosome maturation factor RimM.